The sequence spans 285 residues: Foldase protein PrsA 2 (285 aa).

An N-terminal signal peptide occupies residues M1–A20. The N-palmitoyl cysteine moiety is linked to residue C21. A lipid anchor (S-diacylglycerol cysteine) is attached at C21. The PpiC domain occupies K134–D224.

Belongs to the PrsA family.

The protein localises to the cell membrane. The catalysed reaction is [protein]-peptidylproline (omega=180) = [protein]-peptidylproline (omega=0). Its function is as follows. Plays a major role in protein secretion by helping the post-translocational extracellular folding of several secreted proteins. This Bacillus cereus (strain ATCC 14579 / DSM 31 / CCUG 7414 / JCM 2152 / NBRC 15305 / NCIMB 9373 / NCTC 2599 / NRRL B-3711) protein is Foldase protein PrsA 2 (prsA2).